A 506-amino-acid chain; its full sequence is Maturase K (506 aa).

The protein belongs to the intron maturase 2 family. MatK subfamily.

Its subcellular location is the plastid. The protein localises to the chloroplast. In terms of biological role, usually encoded in the trnK tRNA gene intron. Probably assists in splicing its own and other chloroplast group II introns. In Andromeda polifolia (Bog rosemary), this protein is Maturase K.